The following is a 308-amino-acid chain: HPr kinase/phosphorylase (308 aa).

Active-site residues include His138 and Lys159. 153 to 160 (GESGLGKS) is an ATP binding site. Position 160 (Ser160) interacts with Mg(2+). The Proton acceptor; for phosphorylation activity. Proton donor; for dephosphorylation activity role is filled by Asp177. The interval 201-210 (LEVRGLGLLD) is important for the catalytic mechanism of both phosphorylation and dephosphorylation. Residue Glu202 coordinates Mg(2+). Arg243 is an active-site residue. The important for the catalytic mechanism of dephosphorylation stretch occupies residues 264 to 269 (QVAAGR).

It belongs to the HPrK/P family. Homohexamer. It depends on Mg(2+) as a cofactor.

It carries out the reaction [HPr protein]-L-serine + ATP = [HPr protein]-O-phospho-L-serine + ADP + H(+). The enzyme catalyses [HPr protein]-O-phospho-L-serine + phosphate + H(+) = [HPr protein]-L-serine + diphosphate. Its function is as follows. Catalyzes the ATP- as well as the pyrophosphate-dependent phosphorylation of a specific serine residue in HPr, a phosphocarrier protein of the phosphoenolpyruvate-dependent sugar phosphotransferase system (PTS). HprK/P also catalyzes the pyrophosphate-producing, inorganic phosphate-dependent dephosphorylation (phosphorolysis) of seryl-phosphorylated HPr (P-Ser-HPr). The polypeptide is HPr kinase/phosphorylase (Bordetella avium (strain 197N)).